Here is a 409-residue protein sequence, read N- to C-terminus: Arginine deiminase (409 aa).

C399 acts as the Amidino-cysteine intermediate in catalysis.

Belongs to the arginine deiminase family.

Its subcellular location is the cytoplasm. It carries out the reaction L-arginine + H2O = L-citrulline + NH4(+). Its pathway is amino-acid degradation; L-arginine degradation via ADI pathway; carbamoyl phosphate from L-arginine: step 1/2. The protein is Arginine deiminase of Streptococcus sanguinis (strain SK36).